Reading from the N-terminus, the 222-residue chain is UPF0758 protein YicR (222 aa).

The MPN domain maps to 100–222 (PLLSPEMTRE…YVSFAERGWI (123 aa)). The Zn(2+) site is built by histidine 171, histidine 173, and aspartate 184. A JAMM motif motif is present at residues 171–184 (HNHPSGCAEPSKAD).

This sequence belongs to the UPF0758 family. YicR subfamily.

The polypeptide is UPF0758 protein YicR (Escherichia coli O45:K1 (strain S88 / ExPEC)).